The sequence spans 303 residues: N-acetyl-D-glucosamine kinase (303 aa).

ATP contacts are provided by residues glycine 4–lysine 11 and glycine 133–phenylalanine 140. 4 residues coordinate Zn(2+): histidine 157, cysteine 177, cysteine 179, and cysteine 184.

Belongs to the ROK (NagC/XylR) family. NagK subfamily.

The catalysed reaction is N-acetyl-D-glucosamine + ATP = N-acetyl-D-glucosamine 6-phosphate + ADP + H(+). It participates in cell wall biogenesis; peptidoglycan recycling. Its function is as follows. Catalyzes the phosphorylation of N-acetyl-D-glucosamine (GlcNAc) derived from cell-wall degradation, yielding GlcNAc-6-P. The polypeptide is N-acetyl-D-glucosamine kinase (Shigella boydii serotype 4 (strain Sb227)).